A 997-amino-acid chain; its full sequence is Translation initiation factor IF-2 (997 aa).

Residues 101-409 form a disordered region; that stretch reads ELAAEQAAAR…QHQDRRHEQV (309 aa). Composition is skewed to low complexity over residues 116-185, 195-208, and 244-280; these read AEAV…QAEP, AAPA…VEPA, and PSAP…PAAP. Basic and acidic residues predominate over residues 281–292; sequence DRAREEARRAAE. Residues 385–394 are compositionally biased toward gly residues; the sequence is RAGGKGGRGG. Basic and acidic residues predominate over residues 400 to 409; that stretch reads QHQDRRHEQV. In terms of domain architecture, tr-type G spans 498-665; the sequence is PRAPVVTVMG…NVLLQAEILE (168 aa). The tract at residues 507 to 514 is G1; sequence GHVDHGKT. 507–514 serves as a coordination point for GTP; it reads GHVDHGKT. The segment at 532-536 is G2; the sequence is GITQH. The G3 stretch occupies residues 553–556; sequence DTPG. Residues 553–557 and 607–610 contribute to the GTP site; these read DTPGH and NKID. The G4 stretch occupies residues 607-610; that stretch reads NKID. Positions 643–645 are G5; that stretch reads SAK.

It belongs to the TRAFAC class translation factor GTPase superfamily. Classic translation factor GTPase family. IF-2 subfamily.

Its subcellular location is the cytoplasm. In terms of biological role, one of the essential components for the initiation of protein synthesis. Protects formylmethionyl-tRNA from spontaneous hydrolysis and promotes its binding to the 30S ribosomal subunits. Also involved in the hydrolysis of GTP during the formation of the 70S ribosomal complex. The polypeptide is Translation initiation factor IF-2 (Bordetella bronchiseptica (strain ATCC BAA-588 / NCTC 13252 / RB50) (Alcaligenes bronchisepticus)).